The chain runs to 124 residues: Small ribosomal subunit protein uS12 (124 aa).

Asp89 carries the post-translational modification 3-methylthioaspartic acid.

It belongs to the universal ribosomal protein uS12 family. Part of the 30S ribosomal subunit. Contacts proteins S8 and S17. May interact with IF1 in the 30S initiation complex.

Its function is as follows. With S4 and S5 plays an important role in translational accuracy. Interacts with and stabilizes bases of the 16S rRNA that are involved in tRNA selection in the A site and with the mRNA backbone. Located at the interface of the 30S and 50S subunits, it traverses the body of the 30S subunit contacting proteins on the other side and probably holding the rRNA structure together. The combined cluster of proteins S8, S12 and S17 appears to hold together the shoulder and platform of the 30S subunit. The sequence is that of Small ribosomal subunit protein uS12 from Shewanella denitrificans (strain OS217 / ATCC BAA-1090 / DSM 15013).